The primary structure comprises 308 residues: Aspartate carbamoyltransferase catalytic subunit (308 aa).

R58 and T59 together coordinate carbamoyl phosphate. K86 serves as a coordination point for L-aspartate. Carbamoyl phosphate-binding residues include R108, H136, and Q139. Residues R169 and R227 each coordinate L-aspartate. Carbamoyl phosphate contacts are provided by G268 and P269.

This sequence belongs to the aspartate/ornithine carbamoyltransferase superfamily. ATCase family. As to quaternary structure, heterododecamer (2C3:3R2) of six catalytic PyrB chains organized as two trimers (C3), and six regulatory PyrI chains organized as three dimers (R2).

It carries out the reaction carbamoyl phosphate + L-aspartate = N-carbamoyl-L-aspartate + phosphate + H(+). Its pathway is pyrimidine metabolism; UMP biosynthesis via de novo pathway; (S)-dihydroorotate from bicarbonate: step 2/3. In terms of biological role, catalyzes the condensation of carbamoyl phosphate and aspartate to form carbamoyl aspartate and inorganic phosphate, the committed step in the de novo pyrimidine nucleotide biosynthesis pathway. The protein is Aspartate carbamoyltransferase catalytic subunit of Chloroflexus aggregans (strain MD-66 / DSM 9485).